A 181-amino-acid polypeptide reads, in one-letter code: Protein canopy homolog 1 (181 aa).

Residues methionine 1–glycine 21 form the signal peptide. The Saposin B-type domain occupies proline 25–leucine 177. 3 disulfides stabilise this stretch: cysteine 29/cysteine 173, cysteine 32/cysteine 166, and cysteine 87/cysteine 139. The Prevents secretion from ER motif lies at histidine 178–leucine 181.

Belongs to the canopy family.

The protein resides in the endoplasmic reticulum. Functionally, plays an role in early embryonic development. The protein is Protein canopy homolog 1 (cnpy1) of Xenopus laevis (African clawed frog).